We begin with the raw amino-acid sequence, 138 residues long: MIKLRLKRFGKKREASFRLVACNSTSRRDGRPLQELGFYNPRTKETRLDAEALRQRLSQGAQPTDAVRTLLEKGGLIEKTVRPAEIVGKLKQAAKREADAKQAAKEAAEAKAAAEAEAKAAAEAESADAGAEEAPAEA.

Positions 92-138 (QAAKREADAKQAAKEAAEAKAAAEAEAKAAAEAESADAGAEEAPAEA) are disordered. A compositionally biased stretch (basic and acidic residues) spans 94-122 (AKREADAKQAAKEAAEAKAAAEAEAKAAA).

It belongs to the bacterial ribosomal protein bS16 family.

In Synechococcus sp. (strain WH7803), this protein is Small ribosomal subunit protein bS16.